A 264-amino-acid chain; its full sequence is tRNA pseudouridine synthase A (264 aa).

Aspartate 51 serves as the catalytic Nucleophile. Substrate is bound at residue tyrosine 109.

This sequence belongs to the tRNA pseudouridine synthase TruA family. As to quaternary structure, homodimer.

The catalysed reaction is uridine(38/39/40) in tRNA = pseudouridine(38/39/40) in tRNA. Functionally, formation of pseudouridine at positions 38, 39 and 40 in the anticodon stem and loop of transfer RNAs. This is tRNA pseudouridine synthase A from Photorhabdus laumondii subsp. laumondii (strain DSM 15139 / CIP 105565 / TT01) (Photorhabdus luminescens subsp. laumondii).